Reading from the N-terminus, the 413-residue chain is Multifunctional CCA protein (413 aa).

Positions 8 and 11 each coordinate ATP. The CTP site is built by G8 and R11. Positions 21 and 23 each coordinate Mg(2+). 3 residues coordinate ATP: R91, R143, and R146. Positions 91, 143, and 146 each coordinate CTP. The 102-residue stretch at 232-333 (TGVHVMMVVD…VRLFERSDAL (102 aa)) folds into the HD domain.

Belongs to the tRNA nucleotidyltransferase/poly(A) polymerase family. Bacterial CCA-adding enzyme type 1 subfamily. As to quaternary structure, monomer. Can also form homodimers and oligomers. Requires Mg(2+) as cofactor. It depends on Ni(2+) as a cofactor.

The enzyme catalyses a tRNA precursor + 2 CTP + ATP = a tRNA with a 3' CCA end + 3 diphosphate. It catalyses the reaction a tRNA with a 3' CCA end + 2 CTP + ATP = a tRNA with a 3' CCACCA end + 3 diphosphate. Functionally, catalyzes the addition and repair of the essential 3'-terminal CCA sequence in tRNAs without using a nucleic acid template. Adds these three nucleotides in the order of C, C, and A to the tRNA nucleotide-73, using CTP and ATP as substrates and producing inorganic pyrophosphate. tRNA 3'-terminal CCA addition is required both for tRNA processing and repair. Also involved in tRNA surveillance by mediating tandem CCA addition to generate a CCACCA at the 3' terminus of unstable tRNAs. While stable tRNAs receive only 3'-terminal CCA, unstable tRNAs are marked with CCACCA and rapidly degraded. This chain is Multifunctional CCA protein, found in Burkholderia orbicola (strain MC0-3).